A 324-amino-acid chain; its full sequence is MKITILGAGSFGTAIAIALSSISTSINLWGRNHTDMQSITINRKNLKYLPTYELPDNIIPSSSIDEVLSDHNTCIILAVPTQQLRTLCLYVQQHIFEQTPLLICSKGIENISLKFPSEIVKEILPNNPTYILSGPSFAKEIAANLPCTIVLAGENEVLGTSLINKMSNKTFKIVYSKDTLGVQIGAALKNIIAIACGIITGKNLGNNAVASVIAKGMEEIKTLYTAKNETINLSTLIGPSCLGDLILTCTTTHSRNMSFGVAIGQGEDINKMLNKKSEIIEGVSTVKPLISLAEKLNIELPICTSIYNLLYKNVSLDKTISEIL.

The NADPH site is built by Ser10, Phe11, Arg31, and Lys106. Sn-glycerol 3-phosphate-binding residues include Lys106, Gly134, and Ser136. Ala138 contacts NADPH. 5 residues coordinate sn-glycerol 3-phosphate: Lys189, Asp244, Ser254, Arg255, and Asn256. The active-site Proton acceptor is the Lys189. Arg255 lines the NADPH pocket. 2 residues coordinate NADPH: Ile279 and Glu281.

The protein belongs to the NAD-dependent glycerol-3-phosphate dehydrogenase family.

The protein resides in the cytoplasm. It catalyses the reaction sn-glycerol 3-phosphate + NAD(+) = dihydroxyacetone phosphate + NADH + H(+). The enzyme catalyses sn-glycerol 3-phosphate + NADP(+) = dihydroxyacetone phosphate + NADPH + H(+). It functions in the pathway membrane lipid metabolism; glycerophospholipid metabolism. Functionally, catalyzes the reduction of the glycolytic intermediate dihydroxyacetone phosphate (DHAP) to sn-glycerol 3-phosphate (G3P), the key precursor for phospholipid synthesis. In Ehrlichia canis (strain Jake), this protein is Glycerol-3-phosphate dehydrogenase [NAD(P)+].